The primary structure comprises 104 residues: Large ribosomal subunit protein bL21 (104 aa).

The protein belongs to the bacterial ribosomal protein bL21 family. As to quaternary structure, part of the 50S ribosomal subunit. Contacts protein L20.

This protein binds to 23S rRNA in the presence of protein L20. The sequence is that of Large ribosomal subunit protein bL21 from Pseudomonas entomophila (strain L48).